The sequence spans 349 residues: Glycerol-3-phosphate dehydrogenase [NAD(+)], cytoplasmic (349 aa).

Residue 10–15 (GSGNWG) coordinates NAD(+). Lys120 provides a ligand contact to substrate. Ala153 provides a ligand contact to NAD(+). Ser154 is subject to Phosphoserine. The Proton acceptor role is filled by Lys204. NAD(+) is bound at residue Arg269. 269–270 (RN) contributes to the substrate binding site. Lys289 is subject to N6-succinyllysine. Positions 296 and 298 each coordinate NAD(+). Phosphotyrosine is present on Tyr326.

This sequence belongs to the NAD-dependent glycerol-3-phosphate dehydrogenase family. Homodimer.

The protein localises to the cytoplasm. It carries out the reaction sn-glycerol 3-phosphate + NAD(+) = dihydroxyacetone phosphate + NADH + H(+). Has glycerol-3-phosphate dehydrogenase activity. The polypeptide is Glycerol-3-phosphate dehydrogenase [NAD(+)], cytoplasmic (Rattus norvegicus (Rat)).